A 295-amino-acid chain; its full sequence is MENKLNIVIITGMSGAGKTVAIQSFEDMGYFTVDNMPPNLIEKFVGLLNTPDNKIDKVALVVDMRSRAFFEDIQSIVTELTDNGSVNFKLLFLDANDTELVSRYKETRRSHPLAIDGRTLDGITKEREILADLKNLSEVVIDTSELTPRNLRARILQKFASSTESTFRIEVMSFGFKYGLPLDADLVFDVRFLPNPHYITELRDKNGTDKEVYDYVMEHPQSEEFYENLMKMLVPILPAYKKEGKSVLTIAFGCTGGQHRSVAFAERVSAALKDKWHLNVSHRDKDRRKETVNRS.

Residue 12-19 (GMSGAGKT) participates in ATP binding. 63-66 (DMRS) is a GTP binding site.

This sequence belongs to the RapZ-like family.

In terms of biological role, displays ATPase and GTPase activities. The protein is Nucleotide-binding protein YjiE (yjiE) of Lactococcus lactis subsp. lactis (strain IL1403) (Streptococcus lactis).